The following is a 64-amino-acid chain: DNA gyrase inhibitor YacG (64 aa).

Cys9, Cys12, Cys28, and Cys32 together coordinate Zn(2+). The tract at residues 42 to 64 (DEENAIPGAPDMSDSDGWSEEQY) is disordered. Acidic residues predominate over residues 54–64 (SDSDGWSEEQY).

This sequence belongs to the DNA gyrase inhibitor YacG family. Interacts with GyrB. It depends on Zn(2+) as a cofactor.

Inhibits all the catalytic activities of DNA gyrase by preventing its interaction with DNA. Acts by binding directly to the C-terminal domain of GyrB, which probably disrupts DNA binding by the gyrase. The chain is DNA gyrase inhibitor YacG from Vibrio vulnificus (strain CMCP6).